The following is a 109-amino-acid chain: U-scoloptoxin(16)-Ssd1a (109 aa).

The first 23 residues, 1–23 (MTTSATVIIMVLCVGSLVIFSEG), serve as a signal peptide directing secretion.

Post-translationally, contains 4 disulfide bonds. Expressed by the venom gland.

It is found in the secreted. The chain is U-scoloptoxin(16)-Ssd1a from Scolopendra dehaani (Thai centipede).